Reading from the N-terminus, the 439-residue chain is ATP-dependent protease ATPase subunit HslU (439 aa).

ATP-binding positions include I17, 59–64, D251, E317, and R389; that span reads GVGKTE.

Belongs to the ClpX chaperone family. HslU subfamily. A double ring-shaped homohexamer of HslV is capped on each side by a ring-shaped HslU homohexamer. The assembly of the HslU/HslV complex is dependent on binding of ATP.

Its subcellular location is the cytoplasm. In terms of biological role, ATPase subunit of a proteasome-like degradation complex; this subunit has chaperone activity. The binding of ATP and its subsequent hydrolysis by HslU are essential for unfolding of protein substrates subsequently hydrolyzed by HslV. HslU recognizes the N-terminal part of its protein substrates and unfolds these before they are guided to HslV for hydrolysis. The protein is ATP-dependent protease ATPase subunit HslU of Campylobacter jejuni subsp. jejuni serotype O:2 (strain ATCC 700819 / NCTC 11168).